Consider the following 479-residue polypeptide: MSWEIVIGLEVHVQLNTASKLFSGSKLSTGAEPNTQASLVDLGLPGTLPVVNREAVRKAALFGLAIDADICRHSVFERKNYFYPDLPKGYQTTQLAEPIVGAGTVEIQLDNGEKKSIRIHHAHLEEDAGKSLHEDFHGMTGIDLNRAGTPLIEIVSEPDMANAEEAVAFARKLHAIVTSIGICDGDMSQGNMRFDVNISVRKPGEPLGTRTETKNLNSFRFMEKAIALEVERQIDVLEDGGEIVQETRLYNGDTHTARSMRSKEDANDYRYFPCPDLLPVAITDADIEELKAAMPELPDSRKARFTNDYQLSEYDADLLSGSIATAAFFEAAAKSGGDAKLAANWVMGELAAKLNAEEKSITDSPVSAEQLGQLIARLKDGTISSKIAKQVFEACWAGEGNPDEIIEAKGLKQMSDTGELEKIVDDIIANNAAQADDYRNSDDAKKKKKIGFFVGQAMKATQGKANPQQLNKLLQEKLQ.

Belongs to the GatB/GatE family. GatB subfamily. In terms of assembly, heterotrimer of A, B and C subunits.

The catalysed reaction is L-glutamyl-tRNA(Gln) + L-glutamine + ATP + H2O = L-glutaminyl-tRNA(Gln) + L-glutamate + ADP + phosphate + H(+). It catalyses the reaction L-aspartyl-tRNA(Asn) + L-glutamine + ATP + H2O = L-asparaginyl-tRNA(Asn) + L-glutamate + ADP + phosphate + 2 H(+). Allows the formation of correctly charged Asn-tRNA(Asn) or Gln-tRNA(Gln) through the transamidation of misacylated Asp-tRNA(Asn) or Glu-tRNA(Gln) in organisms which lack either or both of asparaginyl-tRNA or glutaminyl-tRNA synthetases. The reaction takes place in the presence of glutamine and ATP through an activated phospho-Asp-tRNA(Asn) or phospho-Glu-tRNA(Gln). In Alcanivorax borkumensis (strain ATCC 700651 / DSM 11573 / NCIMB 13689 / SK2), this protein is Aspartyl/glutamyl-tRNA(Asn/Gln) amidotransferase subunit B.